Consider the following 326-residue polypeptide: Olfactory receptor 8A1 (326 aa).

Over 1–45 (MGFLSPMHPCRPPTQRRMAAGNHSTVTEFILKGLTKRADLQLPLF) the chain is Extracellular. N-linked (GlcNAc...) asparagine glycosylation is present at Asn22. A helical transmembrane segment spans residues 46–66 (LLFLGIYLVTIVGNLGMITLI). At 67–77 (CLNSQLHTPMY) the chain is on the cytoplasmic side. A helical membrane pass occupies residues 78 to 100 (YFLSNLSLMDLCYSSVITPKMLV). Residues 101–116 (NFVSEKNIISYAGCMS) lie on the Extracellular side of the membrane. Cys114 and Cys195 are oxidised to a cystine. The chain crosses the membrane as a helical span at residues 117 to 137 (QLYFFLVFVIAECYMLTVMAY). Topologically, residues 138–150 (DRYVAICHPLLYN) are cytoplasmic. A helical membrane pass occupies residues 151–171 (IIMSHHTCLLLVAVVYAIGLI). The Extracellular portion of the chain corresponds to 172-222 (GSTIETGLMLKLPYCEHLISHYFCDILPLMKLSCSSTYDVEMTVFFSAGFN). A helical transmembrane segment spans residues 223–243 (IIVTSLTVLVSYTFILSSILG). The Cytoplasmic portion of the chain corresponds to 244-260 (ISTTEGRSKAFSTCSSH). Residues 261 to 281 (LAAVGMFYGSTAFMYLKPSTI) form a helical membrane-spanning segment. The Extracellular segment spans residues 282-287 (SSLTQE). A helical transmembrane segment spans residues 288-308 (NVASVFYTTVIPMLNPLIYSL). Over 309 to 326 (RNKEVKAAVQKTLRGKLF) the chain is Cytoplasmic.

It belongs to the G-protein coupled receptor 1 family.

It is found in the cell membrane. In terms of biological role, odorant receptor. This is Olfactory receptor 8A1 (OR8A1) from Homo sapiens (Human).